Reading from the N-terminus, the 172-residue chain is Transcriptional repressor NrdR (172 aa).

A zinc finger spans residues 3 to 34 (CPFCGAPDTRVIDSRLAGEGDQVRRRRECLSC). Residues 49–139 (PRVVKRDGSR…VYLSFADVQA (91 aa)) form the ATP-cone domain.

Belongs to the NrdR family. Zn(2+) serves as cofactor.

Its function is as follows. Negatively regulates transcription of bacterial ribonucleotide reductase nrd genes and operons by binding to NrdR-boxes. The protein is Transcriptional repressor NrdR of Thioalkalivibrio sulfidiphilus (strain HL-EbGR7).